The sequence spans 645 residues: 1,4-alpha-glucan branching enzyme GlgB (645 aa).

Residue aspartate 309 is the Nucleophile of the active site. The active-site Proton donor is glutamate 352. The segment at 619-645 is disordered; the sequence is VKTRKGSKKQDGSKTKVRSNVTSRGKR. Residues 636–645 show a composition bias toward polar residues; it reads RSNVTSRGKR.

It belongs to the glycosyl hydrolase 13 family. GlgB subfamily. As to quaternary structure, monomer.

It catalyses the reaction Transfers a segment of a (1-&gt;4)-alpha-D-glucan chain to a primary hydroxy group in a similar glucan chain.. The protein operates within glycan biosynthesis; glycogen biosynthesis. In terms of biological role, catalyzes the formation of the alpha-1,6-glucosidic linkages in glycogen by scission of a 1,4-alpha-linked oligosaccharide from growing alpha-1,4-glucan chains and the subsequent attachment of the oligosaccharide to the alpha-1,6 position. This Bacillus cereus (strain Q1) protein is 1,4-alpha-glucan branching enzyme GlgB.